An 89-amino-acid chain; its full sequence is MAHKKAGGSSRNGRDTEGRRLGVKKFGGESVVAGNIIVRQRGTKVQAGPNVGVGRDHTLFALTDGHVKFLRRAEGRVQVAVTPLAIAAE.

The disordered stretch occupies residues 1–21; sequence MAHKKAGGSSRNGRDTEGRRL.

Belongs to the bacterial ribosomal protein bL27 family.

This Granulibacter bethesdensis (strain ATCC BAA-1260 / CGDNIH1) protein is Large ribosomal subunit protein bL27.